Here is a 361-residue protein sequence, read N- to C-terminus: Nicotinate-nucleotide--dimethylbenzimidazole phosphoribosyltransferase (361 aa).

Catalysis depends on E315, which acts as the Proton acceptor.

The protein belongs to the CobT family.

The catalysed reaction is 5,6-dimethylbenzimidazole + nicotinate beta-D-ribonucleotide = alpha-ribazole 5'-phosphate + nicotinate + H(+). Its pathway is nucleoside biosynthesis; alpha-ribazole biosynthesis; alpha-ribazole from 5,6-dimethylbenzimidazole: step 1/2. Functionally, catalyzes the synthesis of alpha-ribazole-5'-phosphate from nicotinate mononucleotide (NAMN) and 5,6-dimethylbenzimidazole (DMB). This chain is Nicotinate-nucleotide--dimethylbenzimidazole phosphoribosyltransferase, found in Clostridium perfringens (strain ATCC 13124 / DSM 756 / JCM 1290 / NCIMB 6125 / NCTC 8237 / Type A).